The chain runs to 216 residues: Adenylate kinase (216 aa).

An ATP-binding site is contributed by 11 to 16 (GSGKGT). Residues 31–60 (ATGDLFRKAIECGDELGDTVKSYMERGELV) are NMP. AMP contacts are provided by residues Thr-32, Arg-37, 58-60 (ELV), 86-89 (GFPR), and Gln-93. An LID region spans residues 127 to 163 (GRWVCRSCQSPYQSGCAEVTKGKCSRCQGGLYQRPDD). Residue Arg-128 coordinates ATP. Zn(2+)-binding residues include Cys-131, Cys-134, Cys-150, and Cys-153. Residues Arg-160 and Arg-171 each coordinate AMP. Residue Ala-199 coordinates ATP.

It belongs to the adenylate kinase family. As to quaternary structure, monomer.

Its subcellular location is the cytoplasm. The enzyme catalyses AMP + ATP = 2 ADP. The protein operates within purine metabolism; AMP biosynthesis via salvage pathway; AMP from ADP: step 1/1. Functionally, catalyzes the reversible transfer of the terminal phosphate group between ATP and AMP. Plays an important role in cellular energy homeostasis and in adenine nucleotide metabolism. This Dehalococcoides mccartyi (strain CBDB1) protein is Adenylate kinase.